Consider the following 540-residue polypeptide: Chaperonin GroEL 2 (540 aa).

ATP contacts are provided by residues 29 to 32 (TLGP), 86 to 90 (DGTTT), Gly413, and Asp492. The segment at 521 to 540 (KPEKEKASVPGGGDMGGMDF) is disordered. Gly residues predominate over residues 530–540 (PGGGDMGGMDF).

This sequence belongs to the chaperonin (HSP60) family. As to quaternary structure, forms a cylinder of 14 subunits composed of two heptameric rings stacked back-to-back. Interacts with the co-chaperonin GroES.

It localises to the secreted. Its subcellular location is the capsule. The protein localises to the cell surface. It is found in the cell wall. It catalyses the reaction ATP + H2O + a folded polypeptide = ADP + phosphate + an unfolded polypeptide.. Its function is as follows. Together with its co-chaperonin GroES, plays an essential role in assisting protein folding. The GroEL-GroES system forms a nano-cage that allows encapsulation of the non-native substrate proteins and provides a physical environment optimized to promote and accelerate protein folding. This Mycobacterium tuberculosis (strain ATCC 25177 / H37Ra) protein is Chaperonin GroEL 2.